A 968-amino-acid chain; its full sequence is Glycine dehydrogenase (decarboxylating) (968 aa).

N6-(pyridoxal phosphate)lysine is present on Lys-713.

The protein belongs to the GcvP family. In terms of assembly, the glycine cleavage system is composed of four proteins: P, T, L and H. Pyridoxal 5'-phosphate serves as cofactor.

The catalysed reaction is N(6)-[(R)-lipoyl]-L-lysyl-[glycine-cleavage complex H protein] + glycine + H(+) = N(6)-[(R)-S(8)-aminomethyldihydrolipoyl]-L-lysyl-[glycine-cleavage complex H protein] + CO2. In terms of biological role, the glycine cleavage system catalyzes the degradation of glycine. The P protein binds the alpha-amino group of glycine through its pyridoxal phosphate cofactor; CO(2) is released and the remaining methylamine moiety is then transferred to the lipoamide cofactor of the H protein. The polypeptide is Glycine dehydrogenase (decarboxylating) (Variovorax paradoxus (strain S110)).